The primary structure comprises 455 residues: Homogentisate 1,2-dioxygenase (455 aa).

His308 serves as the catalytic Proton acceptor. Fe cation-binding residues include His351 and Glu357. 2 residues coordinate homogentisate: Tyr366 and His387. His387 is a Fe cation binding site.

It belongs to the homogentisate dioxygenase family. As to quaternary structure, hexamer; dimer of trimers. Fe cation is required as a cofactor.

It catalyses the reaction homogentisate + O2 = 4-maleylacetoacetate + H(+). The protein operates within amino-acid degradation; L-phenylalanine degradation; acetoacetate and fumarate from L-phenylalanine: step 4/6. Functionally, involved in the catabolism of homogentisate (2,5-dihydroxyphenylacetate or 2,5-OH-PhAc), a central intermediate in the degradation of phenylalanine and tyrosine. Catalyzes the oxidative ring cleavage of the aromatic ring of homogentisate to yield maleylacetoacetate. This Xanthomonas campestris pv. campestris (strain 8004) protein is Homogentisate 1,2-dioxygenase.